The chain runs to 343 residues: Methylthioribose-1-phosphate isomerase (343 aa).

Substrate-binding positions include 48–50 (RGA), Arg88, and Gln193. The active-site Proton donor is the Asp234. A substrate-binding site is contributed by 244–245 (NK).

Belongs to the eIF-2B alpha/beta/delta subunits family. MtnA subfamily.

The catalysed reaction is 5-(methylsulfanyl)-alpha-D-ribose 1-phosphate = 5-(methylsulfanyl)-D-ribulose 1-phosphate. The protein operates within amino-acid biosynthesis; L-methionine biosynthesis via salvage pathway; L-methionine from S-methyl-5-thio-alpha-D-ribose 1-phosphate: step 1/6. Its function is as follows. Catalyzes the interconversion of methylthioribose-1-phosphate (MTR-1-P) into methylthioribulose-1-phosphate (MTRu-1-P). In Thermotoga maritima (strain ATCC 43589 / DSM 3109 / JCM 10099 / NBRC 100826 / MSB8), this protein is Methylthioribose-1-phosphate isomerase.